A 360-amino-acid polypeptide reads, in one-letter code: Phospho-N-acetylmuramoyl-pentapeptide-transferase (360 aa).

The next 10 membrane-spanning stretches (helical) occupy residues Leu-19–Phe-39, Thr-73–Leu-93, Ser-95–Asp-115, Tyr-136–Ile-156, Gly-173–Leu-193, Gly-199–Ser-219, Ile-233–Phe-253, Val-263–Val-283, Leu-288–Val-308, and Val-338–Lys-358.

This sequence belongs to the glycosyltransferase 4 family. MraY subfamily. Mg(2+) serves as cofactor.

It localises to the cell inner membrane. It carries out the reaction UDP-N-acetyl-alpha-D-muramoyl-L-alanyl-gamma-D-glutamyl-meso-2,6-diaminopimeloyl-D-alanyl-D-alanine + di-trans,octa-cis-undecaprenyl phosphate = di-trans,octa-cis-undecaprenyl diphospho-N-acetyl-alpha-D-muramoyl-L-alanyl-D-glutamyl-meso-2,6-diaminopimeloyl-D-alanyl-D-alanine + UMP. It functions in the pathway cell wall biogenesis; peptidoglycan biosynthesis. In terms of biological role, catalyzes the initial step of the lipid cycle reactions in the biosynthesis of the cell wall peptidoglycan: transfers peptidoglycan precursor phospho-MurNAc-pentapeptide from UDP-MurNAc-pentapeptide onto the lipid carrier undecaprenyl phosphate, yielding undecaprenyl-pyrophosphoryl-MurNAc-pentapeptide, known as lipid I. The sequence is that of Phospho-N-acetylmuramoyl-pentapeptide-transferase from Dichelobacter nodosus (strain VCS1703A).